The following is a 159-amino-acid chain: 2-C-methyl-D-erythritol 2,4-cyclodiphosphate synthase (159 aa).

A divalent metal cation-binding residues include Asp-8 and His-10. Residues 8-10 and 34-35 contribute to the 4-CDP-2-C-methyl-D-erythritol 2-phosphate site; these read DVH and HS. Position 42 (His-42) interacts with a divalent metal cation. 4-CDP-2-C-methyl-D-erythritol 2-phosphate-binding positions include 56–58, 61–65, 100–106, 132–135, Phe-139, and Arg-142; these read DIG, FPDTD, AQAPRML, and TTTE.

The protein belongs to the IspF family. Homotrimer. The cofactor is a divalent metal cation.

The catalysed reaction is 4-CDP-2-C-methyl-D-erythritol 2-phosphate = 2-C-methyl-D-erythritol 2,4-cyclic diphosphate + CMP. The protein operates within isoprenoid biosynthesis; isopentenyl diphosphate biosynthesis via DXP pathway; isopentenyl diphosphate from 1-deoxy-D-xylulose 5-phosphate: step 4/6. Its function is as follows. Involved in the biosynthesis of isopentenyl diphosphate (IPP) and dimethylallyl diphosphate (DMAPP), two major building blocks of isoprenoid compounds. Catalyzes the conversion of 4-diphosphocytidyl-2-C-methyl-D-erythritol 2-phosphate (CDP-ME2P) to 2-C-methyl-D-erythritol 2,4-cyclodiphosphate (ME-CPP) with a corresponding release of cytidine 5-monophosphate (CMP). The sequence is that of 2-C-methyl-D-erythritol 2,4-cyclodiphosphate synthase from Escherichia coli O45:K1 (strain S88 / ExPEC).